The chain runs to 84 residues: Small ribosomal subunit protein bS18 (84 aa).

Belongs to the bacterial ribosomal protein bS18 family. As to quaternary structure, part of the 30S ribosomal subunit. Forms a tight heterodimer with protein bS6.

Its function is as follows. Binds as a heterodimer with protein bS6 to the central domain of the 16S rRNA, where it helps stabilize the platform of the 30S subunit. This chain is Small ribosomal subunit protein bS18, found in Methylorubrum extorquens (strain CM4 / NCIMB 13688) (Methylobacterium extorquens).